The primary structure comprises 308 residues: ATP synthase gamma chain (308 aa).

It belongs to the ATPase gamma chain family. In terms of assembly, F-type ATPases have 2 components, CF(1) - the catalytic core - and CF(0) - the membrane proton channel. CF(1) has five subunits: alpha(3), beta(3), gamma(1), delta(1), epsilon(1). CF(0) has three main subunits: a, b and c.

It localises to the cell membrane. Produces ATP from ADP in the presence of a proton gradient across the membrane. The gamma chain is believed to be important in regulating ATPase activity and the flow of protons through the CF(0) complex. The protein is ATP synthase gamma chain of Saccharopolyspora erythraea (strain ATCC 11635 / DSM 40517 / JCM 4748 / NBRC 13426 / NCIMB 8594 / NRRL 2338).